The following is a 444-amino-acid chain: Docking protein 3 (444 aa).

A PH domain is found at 7-123; that stretch reads PVKDGILYQQ…WVDPICQLAF (117 aa). The residue at position 138 (serine 138) is a Phosphoserine. An IRS-type PTB domain is found at 157-261; sequence EVTEFPVIVQ…ARQRERLPEL (105 aa). A Phosphoserine modification is found at serine 274. The disordered stretch occupies residues 278–299; it reads LEPPGELREVAPGFELPTPRKL. Serine 308 and serine 314 each carry phosphoserine. Tyrosine 325 bears the Phosphotyrosine mark. A disordered region spans residues 354–390; that stretch reads GLTNGGPEAQEGPPGGRSPLGSPIYHNTEDLSWPGSA. The segment covering 358–376 has biased composition (low complexity); sequence GGPEAQEGPPGGRSPLGSP. Phosphoserine is present on serine 371.

The protein belongs to the DOK family. Type A subfamily. On tyrosine phosphorylation, interacts with CSK and INPP5D/SHIP1 via their SH2 domains. Both Tyr-325 and Tyr-343 are required for interaction with INPP5D. Only Tyr-325 is required for interaction with CSK. Binds ABL1 through the PTB domain and in a kinase-dependent manner. Does not interact with RasGAP. Post-translationally, constitutively tyrosine-phosphorylated. On IL2 stimulation, phosphorylated on C-terminal tyrosine residues possibly by Src kinases. Can also be phosphorylated by ABL1 kinase. In terms of tissue distribution, predominantly expressed in bone marrow, spleen and lung. Low levels in heart, brain, liver, muscle, thymus, kidney and testis. Highly expressed in B-cells and macrophages.

It is found in the cytoplasm. Its subcellular location is the cell membrane. Functionally, DOK proteins are enzymatically inert adaptor or scaffolding proteins. They provide a docking platform for the assembly of multimolecular signaling complexes. DOK3 is a negative regulator of JNK signaling in B-cells through interaction with INPP5D/SHIP1. May modulate ABL1 function. This chain is Docking protein 3 (Dok3), found in Mus musculus (Mouse).